The sequence spans 212 residues: Interleukin-6 (212 aa).

An N-terminal signal peptide occupies residues M1–P29. C72 and C78 are oxidised to a cystine. N73 carries an N-linked (GlcNAc...) asparagine glycan. Position 81 is a phosphoserine (S81). An intrachain disulfide couples C101 to C111. N-linked (GlcNAc...) asparagine glycans are attached at residues N160 and N172.

It belongs to the IL-6 superfamily. As to quaternary structure, component of a hexamer of two molecules each of IL6, IL6R and IL6ST; first binds to IL6R to associate with the signaling subunit IL6ST. Interacts with IL6R (via the N-terminal ectodomain); this interaction may be affected by IL6R-binding with SORL1, hence decreasing IL6 cis signaling. Interacts with SORL1 (via the N-terminal ectodomain); this interaction leads to IL6 internalization and lysosomal degradation. May form a trimeric complex with the soluble SORL1 ectodomain and soluble IL6R receptor; this interaction might stabilize circulating IL6, hence promoting IL6 trans signaling.

The protein resides in the secreted. In terms of biological role, cytokine with a wide variety of biological functions in immunity, tissue regeneration, and metabolism. Binds to IL6R, then the complex associates to the signaling subunit IL6ST/gp130 to trigger the intracellular IL6-signaling pathway. The interaction with the membrane-bound IL6R and IL6ST stimulates 'classic signaling', whereas the binding of IL6 and soluble IL6R to IL6ST stimulates 'trans-signaling'. Alternatively, 'cluster signaling' occurs when membrane-bound IL6:IL6R complexes on transmitter cells activate IL6ST receptors on neighboring receiver cells. Functionally, IL6 is a potent inducer of the acute phase response. Rapid production of IL6 contributes to host defense during infection and tissue injury, but excessive IL6 synthesis is involved in disease pathology. In the innate immune response, is synthesized by myeloid cells, such as macrophages and dendritic cells, upon recognition of pathogens through toll-like receptors (TLRs) at the site of infection or tissue injury. In the adaptive immune response, is required for the differentiation of B cells into immunoglobulin-secreting cells. Plays a major role in the differentiation of CD4(+) T cell subsets. Essential factor for the development of T follicular helper (Tfh) cells that are required for the induction of germinal-center formation. Required to drive naive CD4(+) T cells to the Th17 lineage. Also required for proliferation of myeloma cells and the survival of plasmablast cells. Its function is as follows. Acts as an essential factor in bone homeostasis and on vessels directly or indirectly by induction of VEGF, resulting in increased angiogenesis activity and vascular permeability. Induces, through 'trans-signaling' and synergistically with IL1B and TNF, the production of VEGF. Involved in metabolic controls, is discharged into the bloodstream after muscle contraction increasing lipolysis and improving insulin resistance. 'Trans-signaling' in central nervous system also regulates energy and glucose homeostasis. Mediates, through GLP-1, crosstalk between insulin-sensitive tissues, intestinal L cells and pancreatic islets to adapt to changes in insulin demand. Also acts as a myokine. Plays a protective role during liver injury, being required for maintenance of tissue regeneration. Also has a pivotal role in iron metabolism by regulating HAMP/hepcidin expression upon inflammation or bacterial infection. Through activation of IL6ST-YAP-NOTCH pathway, induces inflammation-induced epithelial regeneration. In Saimiri sciureus (Common squirrel monkey), this protein is Interleukin-6 (IL6).